Consider the following 291-residue polypeptide: Porphobilinogen deaminase (291 aa).

Cys237 is modified (S-(dipyrrolylmethanemethyl)cysteine).

The protein belongs to the HMBS family. In terms of assembly, monomer. The cofactor is dipyrromethane.

It catalyses the reaction 4 porphobilinogen + H2O = hydroxymethylbilane + 4 NH4(+). It participates in porphyrin-containing compound metabolism; protoporphyrin-IX biosynthesis; coproporphyrinogen-III from 5-aminolevulinate: step 2/4. In terms of biological role, tetrapolymerization of the monopyrrole PBG into the hydroxymethylbilane pre-uroporphyrinogen in several discrete steps. The protein is Porphobilinogen deaminase of Clostridium perfringens (strain 13 / Type A).